The primary structure comprises 208 residues: Small ribosomal subunit protein uS4 (208 aa).

Residues 98-159 form the S4 RNA-binding domain; sequence RRLDNVIYRL…KSRTVAVITN (62 aa).

This sequence belongs to the universal ribosomal protein uS4 family. In terms of assembly, part of the 30S ribosomal subunit. Contacts protein S5. The interaction surface between S4 and S5 is involved in control of translational fidelity.

One of the primary rRNA binding proteins, it binds directly to 16S rRNA where it nucleates assembly of the body of the 30S subunit. Functionally, with S5 and S12 plays an important role in translational accuracy. The protein is Small ribosomal subunit protein uS4 of Desulfatibacillum aliphaticivorans.